The sequence spans 243 residues: Ribonuclease 3 (243 aa).

Positions 10–146 (VNRFRKRFDT…FIGALYLDQG (137 aa)) constitute an RNase III domain. E59 is a binding site for Mg(2+). The active site involves D63. Positions 132 and 135 each coordinate Mg(2+). The active site involves E135. The 70-residue stretch at 172 to 241 (DFKTQFQEYV…AESAYKQLKQ (70 aa)) folds into the DRBM domain. The span at 219 to 231 (GKGKTKKESEQRA) shows a compositional bias: basic and acidic residues. The disordered stretch occupies residues 219-243 (GKGKTKKESEQRAAESAYKQLKQIK).

The protein belongs to the ribonuclease III family. Homodimer. It depends on Mg(2+) as a cofactor.

It localises to the cytoplasm. It catalyses the reaction Endonucleolytic cleavage to 5'-phosphomonoester.. In terms of biological role, digests double-stranded RNA. Involved in the processing of primary rRNA transcript to yield the immediate precursors to the large and small rRNAs (23S and 16S). Processes some mRNAs, and tRNAs when they are encoded in the rRNA operon. Processes pre-crRNA and tracrRNA of type II CRISPR loci if present in the organism. The sequence is that of Ribonuclease 3 from Staphylococcus aureus (strain USA300).